The following is a 70-amino-acid chain: DNA-directed RNA polymerase subunit epsilon (70 aa).

This sequence belongs to the RNA polymerase subunit epsilon family. RNAP is composed of a core of 2 alpha, a beta and a beta' subunit. The core is associated with a delta subunit, and at least one of epsilon or omega. When a sigma factor is associated with the core the holoenzyme is formed, which can initiate transcription.

The enzyme catalyses RNA(n) + a ribonucleoside 5'-triphosphate = RNA(n+1) + diphosphate. A non-essential component of RNA polymerase (RNAP). The polypeptide is DNA-directed RNA polymerase subunit epsilon (Limosilactobacillus reuteri (strain DSM 20016) (Lactobacillus reuteri)).